We begin with the raw amino-acid sequence, 1173 residues long: Paired amphipathic helix protein Sin3-like 6 (1173 aa).

Residues 40-75 form a disordered region; the sequence is NQSAGESGRRLKMKRAREDVHTDTQKRKPEVSSRGE. Residues 55–75 show a composition bias toward basic and acidic residues; the sequence is AREDVHTDTQKRKPEVSSRGE. PAH domains follow at residues 79-148 and 162-232; these read LPRT…LPKG and IRVD…LPNC. 3 disordered regions span residues 236–337, 655–697, and 740–813; these read APST…TTKY, TASG…TAQP, and KHEL…ENNK. Basic and acidic residues-rich tracts occupy residues 264 to 276 and 301 to 319; these read CKLE…SDQR and RDYE…RTEK. Polar residues predominate over residues 320–337; it reads SAASGSQDIGNHKSTTKY. Positions 750–765 are enriched in polar residues; that stretch reads PTASREQSNFEVNGQN. Residues 778–810 show a composition bias toward basic and acidic residues; sequence RSNKDKQSCDKKGAKNKTRAEDDKQENCHKLSE.

The protein resides in the nucleus. Acts as a transcriptional repressor. Plays roles in regulating gene expression and genome stability. This Arabidopsis thaliana (Mouse-ear cress) protein is Paired amphipathic helix protein Sin3-like 6 (SNL6).